We begin with the raw amino-acid sequence, 296 residues long: Sulfotransferase 1C2 (296 aa).

49–54 is a 3'-phosphoadenylyl sulfate binding site; sequence KSGTTW. 107–109 serves as a coordination point for substrate; the sequence is RTH. Histidine 109 (proton acceptor) is an active-site residue. Residues arginine 131, serine 139, tyrosine 194, and 228 to 233 each bind 3'-phosphoadenylyl sulfate; that span reads TSFEKM. Position 139 is a phosphoserine (serine 139). Serine 254 carries the phosphoserine modification. Residue 256–260 participates in 3'-phosphoadenylyl sulfate binding; it reads FMRKG.

It belongs to the sulfotransferase 1 family. Found in gastrointestinal tract tissues, liver and kidney.

It is found in the cytoplasm. Its subcellular location is the lysosome. It localises to the mitochondrion. It carries out the reaction a phenol + 3'-phosphoadenylyl sulfate = an aryl sulfate + adenosine 3',5'-bisphosphate + H(+). The catalysed reaction is cholesterol + 3'-phosphoadenylyl sulfate = cholesterol sulfate + adenosine 3',5'-bisphosphate + H(+). Sulfotransferase that utilizes 3'-phospho-5'-adenylyl sulfate (PAPS) to catalyze the sulfate conjugation of phenolic compounds. Does not transfer sulfate to steroids, dopamine, acetaminophen, or alpha-naphthol. Except in mitochondria, where it can add sulfate to cholesterol producing cholesterol sulfate, which alters mitochondrial membrane organization, and impacts protein complex mobility increasing state-III respiration, thereby modulating mitochondrial respiration. Catalyzes the sulfation of the carcinogenic N-hydroxy-2-acetylaminofluorene leading to highly reactive intermediates capable of forming DNA adducts, potentially resulting in mutagenesis. The sequence is that of Sulfotransferase 1C2 (SULT1C2) from Oryctolagus cuniculus (Rabbit).